The following is a 497-amino-acid chain: Probable cytosol aminopeptidase (497 aa).

Positions 263 and 268 each coordinate Mn(2+). Lys-275 is a catalytic residue. Asp-286, Asp-345, and Glu-347 together coordinate Mn(2+). Arg-349 is a catalytic residue.

The protein belongs to the peptidase M17 family. The cofactor is Mn(2+).

It localises to the cytoplasm. The catalysed reaction is Release of an N-terminal amino acid, Xaa-|-Yaa-, in which Xaa is preferably Leu, but may be other amino acids including Pro although not Arg or Lys, and Yaa may be Pro. Amino acid amides and methyl esters are also readily hydrolyzed, but rates on arylamides are exceedingly low.. The enzyme catalyses Release of an N-terminal amino acid, preferentially leucine, but not glutamic or aspartic acids.. Its function is as follows. Presumably involved in the processing and regular turnover of intracellular proteins. Catalyzes the removal of unsubstituted N-terminal amino acids from various peptides. The polypeptide is Probable cytosol aminopeptidase (Methylorubrum populi (strain ATCC BAA-705 / NCIMB 13946 / BJ001) (Methylobacterium populi)).